Here is a 235-residue protein sequence, read N- to C-terminus: Serine protease SplA (235 aa).

The N-terminal stretch at 1–35 (MNKNVMIKGLTALTILTSLGFAENISDQPHSIAKA) is a signal peptide. Residues histidine 74, aspartate 113, and serine 189 each act as charge relay system in the active site.

Belongs to the peptidase S1B family.

The protein resides in the secreted. This is Serine protease SplA (splA) from Staphylococcus aureus.